The following is a 144-amino-acid chain: Ribonuclease VapC37 (144 aa).

Residues 3-137 form the PINc domain; the sequence is IVDANVLLYA…DFGRFEGVRW (135 aa). Asp5 and Asp90 together coordinate Mg(2+).

This sequence belongs to the PINc/VapC protein family. The cofactor is Mg(2+).

It is found in the secreted. In terms of biological role, probable toxic component of a type II toxin-antitoxin (TA) system. An RNase. Upon expression in M.smegmatis inhibits colony formation. The putative cognate antitoxin is VapB37. The polypeptide is Ribonuclease VapC37 (Mycobacterium tuberculosis (strain ATCC 25618 / H37Rv)).